Consider the following 374-residue polypeptide: tRNA-specific 2-thiouridylase MnmA (374 aa).

ATP is bound by residues 10 to 17 and Leu36; that span reads AMSGGVDS. Cys111 acts as the Nucleophile in catalysis. Cys111 and Cys209 are oxidised to a cystine. Gly135 is an ATP binding site. The interval 159–161 is interaction with tRNA; sequence KDQ. The active-site Cysteine persulfide intermediate is the Cys209.

Belongs to the MnmA/TRMU family.

Its subcellular location is the cytoplasm. The enzyme catalyses S-sulfanyl-L-cysteinyl-[protein] + uridine(34) in tRNA + AH2 + ATP = 2-thiouridine(34) in tRNA + L-cysteinyl-[protein] + A + AMP + diphosphate + H(+). In terms of biological role, catalyzes the 2-thiolation of uridine at the wobble position (U34) of tRNA, leading to the formation of s(2)U34. The sequence is that of tRNA-specific 2-thiouridylase MnmA from Acidobacterium capsulatum (strain ATCC 51196 / DSM 11244 / BCRC 80197 / JCM 7670 / NBRC 15755 / NCIMB 13165 / 161).